The chain runs to 182 residues: Ferritin heavy chain (182 aa).

Met1 is subject to N-acetylmethionine. Thr2 bears the N-acetylthreonine; in Ferritin heavy chain, N-terminally processed mark. The Ferritin-like diiron domain occupies 11–160 (QNYHQDSEAA…DHVTNLRRMG (150 aa)). Fe cation contacts are provided by Glu28, Glu63, His66, Glu108, and Gln142.

Belongs to the ferritin family. Oligomer of 24 subunits. There are two types of subunits: L (light) chain and H (heavy) chain. The major chain can be light or heavy, depending on the species and tissue type. The functional molecule forms a roughly spherical shell with a diameter of 12 nm and contains a central cavity into which the insoluble mineral iron core is deposited. Interacts with NCOA4; NCOA4 promotes targeting of the iron-binding ferritin complex to autolysosomes following starvation or iron depletion.

The protein localises to the cytoplasm. The protein resides in the lysosome. It is found in the cytoplasmic vesicle. It localises to the autophagosome. It catalyses the reaction 4 Fe(2+) + O2 + 4 H(+) = 4 Fe(3+) + 2 H2O. In terms of biological role, stores iron in a soluble, non-toxic, readily available form. Important for iron homeostasis. Has ferroxidase activity. Iron is taken up in the ferrous form and deposited as ferric hydroxides after oxidation. Also plays a role in delivery of iron to cells. Mediates iron uptake in capsule cells of the developing kidney. Delivery to lysosomes is mediated by the cargo receptor NCOA4 for autophagic degradation and release of iron. The sequence is that of Ferritin heavy chain (FTH1) from Equus caballus (Horse).